We begin with the raw amino-acid sequence, 118 residues long: MPRVKGGTVTRARRKKTIKLAKGYFGSKHTLYKVAKQQVMKSGQYAFRDRRQRKRDFRKLWITRINAAARQHEMSYSRLMNGLKKAGIDINRKMLSEIAISDEKAFAQLVTKAKDALK.

It belongs to the bacterial ribosomal protein bL20 family.

Its function is as follows. Binds directly to 23S ribosomal RNA and is necessary for the in vitro assembly process of the 50S ribosomal subunit. It is not involved in the protein synthesizing functions of that subunit. The sequence is that of Large ribosomal subunit protein bL20 from Staphylococcus aureus (strain Mu3 / ATCC 700698).